Consider the following 523-residue polypeptide: MIMYGGGGAGKDGGSTNHLSDGGVILKKGPWTAAEDEILAAYVRENGEGNWNAVQKNTGLARCGKSCRLRWANHLRPNLKKGSFTGDEERLIIQLHAQLGNKWARMAAQLPGRTDNEIKNYWNTRLKRLLRQGLPLYPPDIIPNHQLHPHPHHQQQQQHNHHHHHHQQQQQHQQMYFQPQSSQRNTPSSSPLPSPTPANAKSSSSFTFHTTTANLLHPLSPHTPNTPSQLSSTPPPPPLSSPLCSPRNNQYPTLPLFALPRSQINNNNNGNFTFPRPPPLLQPPSSLFAKRYNNANTPLNCINRVSTAPFSPVSRDSYTSFLTLPYPSPTAQTATYHNTNNPYSSSPSFSLNPSSSSYPTSTSSPSFLHSHYTPSSTSFHTNPVYSMKQEQLPSNQIPQIDGFNNVNNFTDNERQNHNLNSSGAHRRSSSCSLLEDVFEEAEALASGGRGRPPKRRQLTASLPNHNNNTNNNDNFFSVSFGHYDSSDNLCSLQGKTKTTYNTSNLNYSSLQVKCKMFMIKTQI.

2 HTH myb-type domains span residues 23–75 (GVIL…ANHL) and 76–130 (RPNL…KRLL). 2 DNA-binding regions (H-T-H motif) span residues 51–75 (WNAVQKNTGLARCGKSCRLRWANHL) and 103–126 (WARMAAQLPGRTDNEIKNYWNTRL). Disordered regions lie at residues 140–254 (DIIP…YPTL), 332–373 (QTAT…SHYT), 396–426 (QIPQIDGFNNVNNFTDNERQNHNLNSSGAHR), and 444–470 (LASGGRGRPPKRRQLTASLPNHNNNTN). Residues 147-167 (LHPHPHHQQQQQHNHHHHHHQ) show a composition bias toward basic residues. Over residues 175 to 185 (MYFQPQSSQRN) the composition is skewed to polar residues. 3 stretches are compositionally biased toward low complexity: residues 202–212 (SSSSFTFHTTT), 223–232 (TPNTPSQLSS), and 341–368 (NPYSSSPSFSLNPSSSSYPTSTSSPSFL). Over residues 396–410 (QIPQIDGFNNVNNFT) the composition is skewed to polar residues.

As to expression, expressed in pollen grains and pollen tube. Mostly expressed in mature pollen grains, and, to a lower extent, in inflorescences and siliques.

It localises to the nucleus. Functionally, transcription activator. Binds to 5'-CAACTGTC-3' and/or 5'-TAACAAA-3' motif in target gene promoter to promote their expression. Together with MYB97 and MYB101, functions as a male factor that controls pollen tube-synergid interaction in fertilization. Required for pollen tube growth arrest and sperm cell release in the female gametophyte, probably via the regulation of pollen tube-specific gene expression. In Arabidopsis thaliana (Mouse-ear cress), this protein is Transcription factor MYB120.